Reading from the N-terminus, the 270-residue chain is Acyl-[acyl-carrier-protein]--UDP-N-acetylglucosamine O-acyltransferase (270 aa).

Belongs to the transferase hexapeptide repeat family. LpxA subfamily. In terms of assembly, homotrimer.

Its subcellular location is the cytoplasm. The catalysed reaction is a (3R)-hydroxyacyl-[ACP] + UDP-N-acetyl-alpha-D-glucosamine = a UDP-3-O-[(3R)-3-hydroxyacyl]-N-acetyl-alpha-D-glucosamine + holo-[ACP]. Its pathway is glycolipid biosynthesis; lipid IV(A) biosynthesis; lipid IV(A) from (3R)-3-hydroxytetradecanoyl-[acyl-carrier-protein] and UDP-N-acetyl-alpha-D-glucosamine: step 1/6. Involved in the biosynthesis of lipid A, a phosphorylated glycolipid that anchors the lipopolysaccharide to the outer membrane of the cell. This is Acyl-[acyl-carrier-protein]--UDP-N-acetylglucosamine O-acyltransferase from Helicobacter pylori (strain J99 / ATCC 700824) (Campylobacter pylori J99).